The chain runs to 76 residues: Small ribosomal subunit protein bS16 (76 aa).

The protein belongs to the bacterial ribosomal protein bS16 family.

In Helicobacter pylori (strain P12), this protein is Small ribosomal subunit protein bS16.